The following is a 351-amino-acid chain: UDP-N-acetylglucosamine--N-acetylmuramyl-(pentapeptide) pyrophosphoryl-undecaprenol N-acetylglucosamine transferase (351 aa).

UDP-N-acetyl-alpha-D-glucosamine contacts are provided by residues 12-14 (TGG), asparagine 124, arginine 160, serine 188, isoleucine 239, 258-263 (ALTVCE), and glutamine 283.

Belongs to the glycosyltransferase 28 family. MurG subfamily.

It is found in the cell inner membrane. It carries out the reaction di-trans,octa-cis-undecaprenyl diphospho-N-acetyl-alpha-D-muramoyl-L-alanyl-D-glutamyl-meso-2,6-diaminopimeloyl-D-alanyl-D-alanine + UDP-N-acetyl-alpha-D-glucosamine = di-trans,octa-cis-undecaprenyl diphospho-[N-acetyl-alpha-D-glucosaminyl-(1-&gt;4)]-N-acetyl-alpha-D-muramoyl-L-alanyl-D-glutamyl-meso-2,6-diaminopimeloyl-D-alanyl-D-alanine + UDP + H(+). Its pathway is cell wall biogenesis; peptidoglycan biosynthesis. Cell wall formation. Catalyzes the transfer of a GlcNAc subunit on undecaprenyl-pyrophosphoryl-MurNAc-pentapeptide (lipid intermediate I) to form undecaprenyl-pyrophosphoryl-MurNAc-(pentapeptide)GlcNAc (lipid intermediate II). This Actinobacillus pleuropneumoniae serotype 5b (strain L20) protein is UDP-N-acetylglucosamine--N-acetylmuramyl-(pentapeptide) pyrophosphoryl-undecaprenol N-acetylglucosamine transferase.